Consider the following 677-residue polypeptide: DNA ligase (677 aa).

Residues 35 to 39, 84 to 85, and glutamate 116 each bind NAD(+); these read DAEYD and SL. Lysine 118 (N6-AMP-lysine intermediate) is an active-site residue. Arginine 139, glutamate 176, lysine 295, and lysine 319 together coordinate NAD(+). Residues cysteine 413, cysteine 416, cysteine 431, and cysteine 437 each contribute to the Zn(2+) site. One can recognise a BRCT domain in the interval 596–677; that stretch reads LDELPLAGQV…MLAMFADLEG (82 aa).

This sequence belongs to the NAD-dependent DNA ligase family. LigA subfamily. Requires Mg(2+) as cofactor. Mn(2+) is required as a cofactor.

The enzyme catalyses NAD(+) + (deoxyribonucleotide)n-3'-hydroxyl + 5'-phospho-(deoxyribonucleotide)m = (deoxyribonucleotide)n+m + AMP + beta-nicotinamide D-nucleotide.. Its function is as follows. DNA ligase that catalyzes the formation of phosphodiester linkages between 5'-phosphoryl and 3'-hydroxyl groups in double-stranded DNA using NAD as a coenzyme and as the energy source for the reaction. It is essential for DNA replication and repair of damaged DNA. The protein is DNA ligase of Pseudoalteromonas atlantica (strain T6c / ATCC BAA-1087).